Here is a 345-residue protein sequence, read N- to C-terminus: Protein-glutamate methylesterase/protein-glutamine glutaminase (345 aa).

A Response regulatory domain is found at 5–123 (KVIVVDDSVL…ELSKMKDDLI (119 aa)). D56 is modified (4-aspartylphosphate). A CheB-type methylesterase domain is found at 153–343 (SSDSIEAVVI…DEIIKIVRGL (191 aa)). Residues S165, H192, and D285 contribute to the active site.

It belongs to the CheB family. Post-translationally, phosphorylated by CheA. Phosphorylation of the N-terminal regulatory domain activates the methylesterase activity.

The protein resides in the cytoplasm. The catalysed reaction is [protein]-L-glutamate 5-O-methyl ester + H2O = L-glutamyl-[protein] + methanol + H(+). It carries out the reaction L-glutaminyl-[protein] + H2O = L-glutamyl-[protein] + NH4(+). In terms of biological role, involved in chemotaxis. Part of a chemotaxis signal transduction system that modulates chemotaxis in response to various stimuli. Catalyzes the demethylation of specific methylglutamate residues introduced into the chemoreceptors (methyl-accepting chemotaxis proteins or MCP) by CheR. Also mediates the irreversible deamidation of specific glutamine residues to glutamic acid. The polypeptide is Protein-glutamate methylesterase/protein-glutamine glutaminase (Clostridium acetobutylicum (strain ATCC 824 / DSM 792 / JCM 1419 / IAM 19013 / LMG 5710 / NBRC 13948 / NRRL B-527 / VKM B-1787 / 2291 / W)).